A 201-amino-acid chain; its full sequence is Glycerol-3-phosphate acyltransferase (201 aa).

5 helical membrane-spanning segments follow: residues 3-23 (LFAIFYLFLAYLLGSVSSAIL), 53-73 (WVALSVLLFDMLKGMLPVWLG), 80-100 (HFELGMVALGACLGHIFPIFF), 115-135 (IAPISWGVAGSMLGTWLLIFF), and 153-175 (FYVWWFKPEFTFPVALVCCLLIY).

Belongs to the PlsY family. In terms of assembly, probably interacts with PlsX.

Its subcellular location is the cell inner membrane. The catalysed reaction is an acyl phosphate + sn-glycerol 3-phosphate = a 1-acyl-sn-glycero-3-phosphate + phosphate. The protein operates within lipid metabolism; phospholipid metabolism. Catalyzes the transfer of an acyl group from acyl-phosphate (acyl-PO(4)) to glycerol-3-phosphate (G3P) to form lysophosphatidic acid (LPA). This enzyme utilizes acyl-phosphate as fatty acyl donor, but not acyl-CoA or acyl-ACP. The chain is Glycerol-3-phosphate acyltransferase from Pasteurella multocida (strain Pm70).